Reading from the N-terminus, the 373-residue chain is MDKANGAYKTALKAASAVAPAEKFPVFQATFDKNLKEGLSGPDAVGFAKKLDAFIQTSYLSTKAAEPKEKFDLFVLSLTEVLRFMAGAVKAPPASKFPAKPAPKVAAYTPAAPAGAAPKATTDEQKLIEKINVGFKAAVAAAAGVPAASKYKTFVATFGAASNKAFAEALSTEPKGAAVASSKAVLTSKLDAAYKLAYKSAEGATPEAKYDAYVATLSEALRIIAGTLEVHGVKPAAEEVKAIPAGELQVIDKVDAAFKVAATAANAAPANDKFTVFEAAFNDAIKASTGGAYQSYKFIPALEAAVKQSYAATVATAPAVKYTVFETALKKAITAMSQAQKAAKPAAAVTGTATSAVGAATGAATAAAGGYKV.

The signal sequence occupies residues 1–28 (MDKANGAYKTALKAASAVAPAEKFPVFQ).

The protein belongs to the Poa p IX/Phl p VI allergen family. Pollen.

The protein is Pollen allergen KBG 31 of Poa pratensis (Kentucky bluegrass).